Consider the following 399-residue polypeptide: Dual-specificity RNA methyltransferase RlmN (399 aa).

E122 serves as the catalytic Proton acceptor. Positions E128–L371 constitute a Radical SAM core domain. An intrachain disulfide couples C135 to C374. Positions 142, 146, and 149 each coordinate [4Fe-4S] cluster. S-adenosyl-L-methionine contacts are provided by residues G200–E201, S232, S254–H256, and N331. Catalysis depends on C374, which acts as the S-methylcysteine intermediate.

Belongs to the radical SAM superfamily. RlmN family. The cofactor is [4Fe-4S] cluster.

It localises to the cytoplasm. The catalysed reaction is adenosine(2503) in 23S rRNA + 2 reduced [2Fe-2S]-[ferredoxin] + 2 S-adenosyl-L-methionine = 2-methyladenosine(2503) in 23S rRNA + 5'-deoxyadenosine + L-methionine + 2 oxidized [2Fe-2S]-[ferredoxin] + S-adenosyl-L-homocysteine. It catalyses the reaction adenosine(37) in tRNA + 2 reduced [2Fe-2S]-[ferredoxin] + 2 S-adenosyl-L-methionine = 2-methyladenosine(37) in tRNA + 5'-deoxyadenosine + L-methionine + 2 oxidized [2Fe-2S]-[ferredoxin] + S-adenosyl-L-homocysteine. Specifically methylates position 2 of adenine 2503 in 23S rRNA and position 2 of adenine 37 in tRNAs. m2A2503 modification seems to play a crucial role in the proofreading step occurring at the peptidyl transferase center and thus would serve to optimize ribosomal fidelity. The chain is Dual-specificity RNA methyltransferase RlmN from Rhodopseudomonas palustris (strain HaA2).